The following is a 177-amino-acid chain: Inner membrane-spanning protein YciB (177 aa).

The next 5 helical transmembrane spans lie at 22–42 (IFIA…LYWI), 50–70 (INLF…IFHN), 76–96 (WKIT…QFFM), 121–141 (FFWA…ALCL), and 151–171 (VFGL…YINF).

The protein belongs to the YciB family.

It localises to the cell inner membrane. Its function is as follows. Plays a role in cell envelope biogenesis, maintenance of cell envelope integrity and membrane homeostasis. This chain is Inner membrane-spanning protein YciB, found in Buchnera aphidicola subsp. Schizaphis graminum (strain Sg).